The sequence spans 321 residues: Probable protein phosphatase methylesterase 1 (321 aa).

Catalysis depends on residues serine 170, aspartate 195, and histidine 307.

This sequence belongs to the AB hydrolase superfamily.

The enzyme catalyses [phosphatase 2A protein]-C-terminal L-leucine methyl ester + H2O = [phosphatase 2A protein]-C-terminal L-leucine + methanol + H(+). Its function is as follows. Demethylates proteins that have been reversibly carboxymethylated. This chain is Probable protein phosphatase methylesterase 1 (ppme1), found in Dictyostelium discoideum (Social amoeba).